The primary structure comprises 483 residues: Protein EFFECTOR OF TRANSCRIPTION 2 (483 aa).

Residues 64–112 (SCPGLYELGVAVIGQEQCRKLEPDIVLASYLGQAESVRSRLQRYGRSGA) enclose the GIY-YIG domain. Cx9Cx9RCx2HK repeat units lie at residues 278–303 (CGVL…IEHK) and 338–363 (CGVI…EDHK). Residues 380–396 (EKTVKDEKPDPESHTES) are compositionally biased toward basic and acidic residues. Positions 380-399 (EKTVKDEKPDPESHTESIEE) are disordered. Cx9Cx9RCx2HK repeat units lie at residues 406 to 431 (CEAT…WQHK) and 453 to 478 (CGVK…EEHK).

Expressed in vascular tissues of stems, hypocotyls, leaves and flowers. Expressed in the vascular bundles of xylem in shoot parenchyma cells. Expressed in the remnant cytoplasm of differentiated fiber cells and in protoxylem element of parenchymal cells.

The protein localises to the cytoplasm. It localises to the nucleus. In terms of biological role, transcriptional regulator involved in the regulation of cell differentiation in meristems. Probably regulates the expression of various KNAT genes involved in the maintenance of the cells in an undifferentiated, merismastic state. Plays a role in the regulation of gibberellin 20 oxidase and the gibberellin-regulated protein GASA4. Localizes in the nucleus during the cellular differentiation state and may act via a single strand cutting domain. Transcriptional regulator required for the induction of dormancy during late seed development. Interacts genetically with FUS3 and may be component of the same regulatory pathway during embryogenesis. Binds both linear and supercoiled DNA without sequence preference. The protein is Protein EFFECTOR OF TRANSCRIPTION 2 of Arabidopsis thaliana (Mouse-ear cress).